Reading from the N-terminus, the 486-residue chain is Glutamyl-tRNA(Gln) amidotransferase subunit A (486 aa).

Active-site charge relay system residues include K77 and S152. Residue S176 is the Acyl-ester intermediate of the active site.

Belongs to the amidase family. GatA subfamily. In terms of assembly, heterotrimer of A, B and C subunits.

It catalyses the reaction L-glutamyl-tRNA(Gln) + L-glutamine + ATP + H2O = L-glutaminyl-tRNA(Gln) + L-glutamate + ADP + phosphate + H(+). Its function is as follows. Allows the formation of correctly charged Gln-tRNA(Gln) through the transamidation of misacylated Glu-tRNA(Gln) in organisms which lack glutaminyl-tRNA synthetase. The reaction takes place in the presence of glutamine and ATP through an activated gamma-phospho-Glu-tRNA(Gln). This chain is Glutamyl-tRNA(Gln) amidotransferase subunit A, found in Pediococcus pentosaceus (strain ATCC 25745 / CCUG 21536 / LMG 10740 / 183-1w).